Reading from the N-terminus, the 244-residue chain is Coenzyme Q-binding protein COQ10 homolog B, mitochondrial (244 aa).

Belongs to the COQ10 family. As to quaternary structure, interacts with coenzyme Q.

The protein localises to the mitochondrion inner membrane. In terms of biological role, required for the function of coenzyme Q in the respiratory chain. May serve as a chaperone or may be involved in the transport of Q6 from its site of synthesis to the catalytic sites of the respiratory complexes. The polypeptide is Coenzyme Q-binding protein COQ10 homolog B, mitochondrial (coq10b) (Xenopus laevis (African clawed frog)).